We begin with the raw amino-acid sequence, 521 residues long: MAHQKILILDFGSQVTQLIARRVREQQVYCEIHPFDVSDDFVREFAPAGVILSGGPNSVYEAVGWHAPQSVFELGVPVLGICYGMQTMAQQLGGSVESSGKREFGYAEIRARGHSELFRSIEDRTNDEGHGLLDVWMSHGDKVTALPPGFKVIASNESCPVAGMADEVRKFYAVQFHPEVTHTIKGRDMLARFVHEICGCGRDWNMPDYVNEAIEKVRAQVGQEEVILGLSGGVDSSVVAALLHRAIGEQLTCVFVDNGLLRLNEAEQVMLTFARNLGVKVIHVDATEQFMGHLKGVSDPEAKRKIIGREFVEVFQAEANKLPNAKWLAQGTIYPDVIESAGSKTGKAHTIKSHHNVGGLPETLNLKLLEPLRELFKDEVRELGIALGLPHEMVYRHPFPGPGLGVRILGEVKQEFAELLRRADAIFIDELRAADWYDKTSQAFAVFLPVKSVGVMGDGRTYEYVVALRAVETQDFMTAHWAELPHSLLGKVSNRIINEVRGINRVVYDISGKPPATIEWE.

The 199-residue stretch at 5–203 folds into the Glutamine amidotransferase type-1 domain; the sequence is KILILDFGSQ…VHEICGCGRD (199 aa). Catalysis depends on C82, which acts as the Nucleophile. Catalysis depends on residues H177 and E179. The 193-residue stretch at 204 to 396 folds into the GMPS ATP-PPase domain; that stretch reads WNMPDYVNEA…LGLPHEMVYR (193 aa). 231-237 lines the ATP pocket; that stretch reads SGGVDSS.

In terms of assembly, homodimer.

The catalysed reaction is XMP + L-glutamine + ATP + H2O = GMP + L-glutamate + AMP + diphosphate + 2 H(+). It participates in purine metabolism; GMP biosynthesis; GMP from XMP (L-Gln route): step 1/1. Catalyzes the synthesis of GMP from XMP. In Aromatoleum aromaticum (strain DSM 19018 / LMG 30748 / EbN1) (Azoarcus sp. (strain EbN1)), this protein is GMP synthase [glutamine-hydrolyzing].